Here is a 144-residue protein sequence, read N- to C-terminus: Large ribosomal subunit protein uL16 (144 aa).

The protein belongs to the universal ribosomal protein uL16 family. As to quaternary structure, part of the 50S ribosomal subunit.

In terms of biological role, binds 23S rRNA and is also seen to make contacts with the A and possibly P site tRNAs. In Clostridium perfringens (strain ATCC 13124 / DSM 756 / JCM 1290 / NCIMB 6125 / NCTC 8237 / Type A), this protein is Large ribosomal subunit protein uL16.